Consider the following 129-residue polypeptide: uncharacterized protein (129 aa).

Over 1-28 (MAGTLFIILRFVDTTLPSSRVYCVRSLE) the chain is Cytoplasmic. Residues 29 to 49 (VSVAVELAAATVLAFESIGVV) traverse the membrane as a helical segment. Residues 50–54 (DDCGR) lie on the Extracellular side of the membrane. A helical transmembrane segment spans residues 55 to 75 (SVLFSIILIAAFICSVFLIAS). Topologically, residues 76-129 (EDIAGSRRSTGSCVTLWEGRNISFCLYRSNWLNTVPVGYMFFLRKNRSLDERYF) are cytoplasmic.

It is found in the membrane. This is an uncharacterized protein from Saccharomyces cerevisiae (strain ATCC 204508 / S288c) (Baker's yeast).